We begin with the raw amino-acid sequence, 509 residues long: MEELQGYLEIDGSRQQCFLYPLFFQEYIYALAHDHGLNGSILYKPMEIFGYDNKFSSLIGKRLITRMHQQNHLILSVKDSKQNLFVVPNKYFDSQMMSEVFAVIVEIPFSLRLVSSLEEKKIAKSHIRSIQSIHSIFLFFEDKFSHLNHVSDILIPHPIHLEILVQTLRCWIQDAPSLHLLRFFLYESRNSNSLIIPKKSISFFSKRNQRFFLFLYNSHIYGCESIFVFLRKQSSHLRSTSSRTLLERTHLYGKIEHFLVVLRNDFQRTLWLFKDPFMHYVRYQGKAIMASKGTHFLMKKWKYHLVNLWQCHFYLWSQPDSIHINQLYNHSFYFLGYLSRVQLNPSVVRSQMLENLFIIDTAINKFETIVPMIPLIRSLAKAKFCNVSGHPISKPARADSSDSDIIDRFGRICRNLFHYHSGSLKKQSLYRIKYILRLSCARTLARKHKSKVRAFLKRLGSGFFQEFLTEEEQVLSLIFPRTYSTSHRSHSERIWYLDIIRINDLANHE.

This sequence belongs to the intron maturase 2 family. MatK subfamily.

It is found in the plastid. The protein localises to the chloroplast. Functionally, usually encoded in the trnK tRNA gene intron. Probably assists in splicing its own and other chloroplast group II introns. The sequence is that of Maturase K from Drimys granadensis.